Reading from the N-terminus, the 418-residue chain is Putative ion-transport protein YfeO (418 aa).

12 consecutive transmembrane segments (helical) span residues 10–30, 54–74, 99–119, 120–140, 149–169, 186–206, 223–243, 258–278, 300–320, 322–342, 343–363, and 371–391; these read LLLS…LIVV, DSPL…GLVI, ALPG…SLGP, EHPI…RLLP, ILAS…AALI, LFAP…FFHP, ILSG…AVWC, VLVL…GGPV, DYFL…ASGF, GGRI…LHEH, VPAV…VLVV, and LFMA…CIVM.

Belongs to the chloride channel (TC 2.A.49) family.

It is found in the cell membrane. This Escherichia coli O8 (strain IAI1) protein is Putative ion-transport protein YfeO.